The primary structure comprises 416 residues: Gamma-glutamyl phosphate reductase (416 aa).

It belongs to the gamma-glutamyl phosphate reductase family.

The protein localises to the cytoplasm. It catalyses the reaction L-glutamate 5-semialdehyde + phosphate + NADP(+) = L-glutamyl 5-phosphate + NADPH + H(+). It participates in amino-acid biosynthesis; L-proline biosynthesis; L-glutamate 5-semialdehyde from L-glutamate: step 2/2. Functionally, catalyzes the NADPH-dependent reduction of L-glutamate 5-phosphate into L-glutamate 5-semialdehyde and phosphate. The product spontaneously undergoes cyclization to form 1-pyrroline-5-carboxylate. The chain is Gamma-glutamyl phosphate reductase from Vibrio atlanticus (strain LGP32) (Vibrio splendidus (strain Mel32)).